An 827-amino-acid polypeptide reads, in one-letter code: NT-3 growth factor receptor (827 aa).

Positions 1-31 (MDVSLCPTKCTFWRVFLLWSIWGDYLLSVLA) are cleaved as a signal peptide. 2 disulfide bridges follow: cysteine 32-cysteine 38 and cysteine 36-cysteine 45. At 32–430 (CPANCLCSKT…ITVTHKPEED (399 aa)) the chain is on the extracellular side. 3 N-linked (GlcNAc...) asparagine glycosylation sites follow: asparagine 68, asparagine 72, and asparagine 79. LRR repeat units lie at residues 104-125 (GLQRLTIRNSGLRNIQPRAFAK) and 128-149 (HLRYIDLSGNRLTTLSWQLFQT). Residues 160-209 (NPFNCSCDIRWIQLWQEKGEANLQSQQLHCMNLDTAVILLRNMNITQCDL) form the LRRCT domain. Asparagine 163 carries an N-linked (GlcNAc...) asparagine glycan. 2 disulfide bridges follow: cysteine 164–cysteine 189 and cysteine 166–cysteine 207. N-linked (GlcNAc...) asparagine glycosylation is found at asparagine 203, asparagine 218, asparagine 232, asparagine 259, asparagine 267, asparagine 272, and asparagine 294. 2 consecutive Ig-like C2-type domains span residues 210–300 (PEIS…VLLT) and 319–382 (HCIA…VATN). A disulfide bridge connects residues cysteine 231 and cysteine 284. Cysteine 320 and cysteine 362 are joined by a disulfide. N-linked (GlcNAc...) asparagine glycans are attached at residues asparagine 375 and asparagine 388. A helical transmembrane segment spans residues 431–455 (TFGVSIAVGLAAFACVLLVVLFIMI). Residues 456–827 (NKYGRRSKFG…ATPIYLDILG (372 aa)) lie on the Cytoplasmic side of the membrane. Phosphotyrosine; by autocatalysis is present on tyrosine 518. A Protein kinase domain is found at 540–812 (IVLKRELGEG…LNIKEIYKIL (273 aa)). Residues 546–554 (LGEGAFGKV) and lysine 574 each bind ATP. The active-site Proton acceptor is the aspartate 681. 4 positions are modified to phosphotyrosine; by autocatalysis: tyrosine 707, tyrosine 711, tyrosine 712, and tyrosine 822.

Belongs to the protein kinase superfamily. Tyr protein kinase family. Insulin receptor subfamily. Exists in a dynamic equilibrium between monomeric (low affinity) and dimeric (high affinity) structures. Interacts with PTPRS. Post-translationally, ligand-mediated auto-phosphorylation.

The protein resides in the membrane. It catalyses the reaction L-tyrosyl-[protein] + ATP = O-phospho-L-tyrosyl-[protein] + ADP + H(+). In terms of biological role, receptor tyrosine kinase involved in nervous system and probably heart development. Upon binding of its ligand NTF3/neurotrophin-3, NTRK3 autophosphorylates and activates different signaling pathways, including the phosphatidylinositol 3-kinase/AKT and the MAPK pathways, that control cell survival and differentiation. The KT and KD isoforms fail to stimulate transformation, process outgrowth or survival. Isoform KI25 exhibits tyrosine phosphorylation in the absence of ligand and is unable to mediate survival of neuronal cells. The protein is NT-3 growth factor receptor (NTRK3) of Gallus gallus (Chicken).